The sequence spans 100 residues: Large ribosomal subunit protein uL23 (100 aa).

The protein belongs to the universal ribosomal protein uL23 family. As to quaternary structure, part of the 50S ribosomal subunit. Contacts protein L29, and trigger factor when it is bound to the ribosome.

One of the early assembly proteins it binds 23S rRNA. One of the proteins that surrounds the polypeptide exit tunnel on the outside of the ribosome. Forms the main docking site for trigger factor binding to the ribosome. This is Large ribosomal subunit protein uL23 from Yersinia pestis bv. Antiqua (strain Antiqua).